The sequence spans 671 residues: tRNA 5-methylaminomethyl-2-thiouridine biosynthesis bifunctional protein MnmC (671 aa).

The interval 1–245 (MVNVMNTLSF…KREMLWGEKP (245 aa)) is tRNA (mnm(5)s(2)U34)-methyltransferase. The tract at residues 272 to 671 (VGGGVASLFV…RKLLKGSKVE (400 aa)) is FAD-dependent cmnm(5)s(2)U34 oxidoreductase.

In the N-terminal section; belongs to the methyltransferase superfamily. tRNA (mnm(5)s(2)U34)-methyltransferase family. It in the C-terminal section; belongs to the DAO family. FAD serves as cofactor.

Its subcellular location is the cytoplasm. The catalysed reaction is 5-aminomethyl-2-thiouridine(34) in tRNA + S-adenosyl-L-methionine = 5-methylaminomethyl-2-thiouridine(34) in tRNA + S-adenosyl-L-homocysteine + H(+). Catalyzes the last two steps in the biosynthesis of 5-methylaminomethyl-2-thiouridine (mnm(5)s(2)U) at the wobble position (U34) in tRNA. Catalyzes the FAD-dependent demodification of cmnm(5)s(2)U34 to nm(5)s(2)U34, followed by the transfer of a methyl group from S-adenosyl-L-methionine to nm(5)s(2)U34, to form mnm(5)s(2)U34. The protein is tRNA 5-methylaminomethyl-2-thiouridine biosynthesis bifunctional protein MnmC of Actinobacillus pleuropneumoniae serotype 3 (strain JL03).